Consider the following 1108-residue polypeptide: Alpha-mannosidase 2 (1108 aa).

Topologically, residues 1-9 (MLRIRRRFA) are cytoplasmic. Residues 10-30 (LVICSGCLLVFLSLYIILNFA) form a helical; Signal-anchor for type II membrane protein membrane-spanning segment. Residues 31–1108 (APAATQIKPN…TAAYVSSHSS (1078 aa)) are Lumenal-facing. The tract at residues 70 to 92 (AETSNRDDPIRPPLKVARSPRPG) is disordered. 4 residues coordinate Zn(2+): histidine 153, aspartate 155, aspartate 267, and histidine 534. The active-site Nucleophile is aspartate 267.

This sequence belongs to the glycosyl hydrolase 38 family. Homodimer; disulfide-linked. It depends on Zn(2+) as a cofactor.

The protein resides in the golgi apparatus membrane. The enzyme catalyses N(4)-{beta-D-GlcNAc-(1-&gt;2)-alpha-D-Man-(1-&gt;3)-[alpha-D-Man-(1-&gt;3)-[alpha-D-Man-(1-&gt;6)]-alpha-D-Man-(1-&gt;6)]-beta-D-Man-(1-&gt;4)-beta-D-GlcNAc-(1-&gt;4)-beta-D-GlcNAc}-L-asparaginyl-[protein] + 2 H2O = 2 alpha-D-mannopyranose + an N(4)-{beta-D-GlcNAc-(1-&gt;2)-alpha-D-Man-(1-&gt;3)-[alpha-D-Man-(1-&gt;6)]-beta-D-Man-(1-&gt;4)-beta-D-GlcNAc-(1-&gt;4)-beta-D-GlcNAc}-L-asparaginyl-[protein]. It functions in the pathway protein modification; protein glycosylation. Its function is as follows. Catalyzes the first committed step in the biosynthesis of complex N-glycans. It controls conversion of high mannose to complex N-glycans; the final hydrolytic step in the N-glycan maturation pathway. This chain is Alpha-mannosidase 2, found in Drosophila melanogaster (Fruit fly).